Here is a 128-residue protein sequence, read N- to C-terminus: Histone H2A type 1-H (128 aa).

Residues 1 to 22 form a disordered region; the sequence is MSGRGKQGGKARAKAKTRSSRA. An N-acetylserine modification is found at Ser2. Phosphoserine; by RPS6KA5 is present on Ser2. Arg4 carries the post-translational modification Citrulline; alternate. Arg4 is modified (symmetric dimethylarginine; by PRMT5; alternate). N6-(2-hydroxyisobutyryl)lysine; alternate is present on residues Lys6 and Lys10. N6-(beta-hydroxybutyryl)lysine; alternate is present on Lys6. A compositionally biased stretch (basic residues) spans 7–19; the sequence is QGGKARAKAKTRS. At Lys10 the chain carries N6-lactoyllysine; alternate. Position 10 is an N6-succinyllysine; alternate (Lys10). Residues Lys14 and Lys16 each participate in a glycyl lysine isopeptide (Lys-Gly) (interchain with G-Cter in ubiquitin) cross-link. The residue at position 37 (Lys37) is an N6-(2-hydroxyisobutyryl)lysine; alternate. An N6-(beta-hydroxybutyryl)lysine; alternate modification is found at Lys37. Position 37 is an N6-crotonyllysine; alternate (Lys37). N6-(2-hydroxyisobutyryl)lysine occurs at positions 75 and 76. The residue at position 96 (Lys96) is an N6-(2-hydroxyisobutyryl)lysine; alternate. Lys96 is modified (N6-succinyllysine; alternate). Lys96 carries the N6-glutaryllysine; alternate modification. Gln105 carries the N5-methylglutamine modification. Lys119 carries the post-translational modification N6-(2-hydroxyisobutyryl)lysine; alternate. N6-crotonyllysine; alternate is present on residues Lys119 and Lys120. Residues Lys119 and Lys120 each carry the N6-glutaryllysine; alternate modification. An N6-(beta-hydroxybutyryl)lysine; alternate modification is found at Lys120. Residue Lys120 forms a Glycyl lysine isopeptide (Lys-Gly) (interchain with G-Cter in ubiquitin); alternate linkage. Thr121 is modified (phosphothreonine; by DCAF1). At Lys126 the chain carries N6-(beta-hydroxybutyryl)lysine; alternate. At Lys126 the chain carries N6-crotonyllysine; alternate. At Lys126 the chain carries N6-glutaryllysine; alternate.

Belongs to the histone H2A family. The nucleosome is a histone octamer containing two molecules each of H2A, H2B, H3 and H4 assembled in one H3-H4 heterotetramer and two H2A-H2B heterodimers. The octamer wraps approximately 147 bp of DNA. Deiminated on Arg-4 in granulocytes upon calcium entry. In terms of processing, monoubiquitination of Lys-120 (H2AK119Ub) by RING1, TRIM37 and RNF2/RING2 complex gives a specific tag for epigenetic transcriptional repression and participates in X chromosome inactivation of female mammals. It is involved in the initiation of both imprinted and random X inactivation. Ubiquitinated H2A is enriched in inactive X chromosome chromatin. Ubiquitination of H2A functions downstream of methylation of 'Lys-27' of histone H3 (H3K27me). H2AK119Ub by RNF2/RING2 can also be induced by ultraviolet and may be involved in DNA repair. Following DNA double-strand breaks (DSBs), it is ubiquitinated through 'Lys-63' linkage of ubiquitin moieties by the E2 ligase UBE2N and the E3 ligases RNF8 and RNF168, leading to the recruitment of repair proteins to sites of DNA damage. Ubiquitination at Lys-14 and Lys-16 (H2AK13Ub and H2AK15Ub, respectively) in response to DNA damage is initiated by RNF168 that mediates monoubiquitination at these 2 sites, and 'Lys-63'-linked ubiquitin are then conjugated to monoubiquitin; RNF8 is able to extend 'Lys-63'-linked ubiquitin chains in vitro. H2AK119Ub and ionizing radiation-induced 'Lys-63'-linked ubiquitination (H2AK13Ub and H2AK15Ub) are distinct events. Post-translationally, phosphorylation on Ser-2 (H2AS1ph) is enhanced during mitosis. Phosphorylation on Ser-2 by RPS6KA5/MSK1 directly represses transcription. Acetylation of H3 inhibits Ser-2 phosphorylation by RPS6KA5/MSK1. Phosphorylation at Thr-121 (H2AT120ph) by DCAF1 is present in the regulatory region of many tumor suppresor genes and down-regulates their transcription. Symmetric dimethylation on Arg-4 by the PRDM1/PRMT5 complex may play a crucial role in the germ-cell lineage. In terms of processing, glutamine methylation at Gln-105 (H2AQ104me) by FBL is specifically dedicated to polymerase I. It is present at 35S ribosomal DNA locus and impairs binding of the FACT complex. Post-translationally, crotonylation (Kcr) is specifically present in male germ cells and marks testis-specific genes in post-meiotic cells, including X-linked genes that escape sex chromosome inactivation in haploid cells. Crotonylation marks active promoters and enhancers and confers resistance to transcriptional repressors. It is also associated with post-meiotically activated genes on autosomes. Hydroxybutyrylation of histones is induced by starvation. In terms of processing, lactylated in macrophages by EP300/P300 by using lactoyl-CoA directly derived from endogenous or exogenous lactate, leading to stimulates gene transcription.

It is found in the nucleus. The protein localises to the chromosome. In terms of biological role, core component of nucleosome. Nucleosomes wrap and compact DNA into chromatin, limiting DNA accessibility to the cellular machineries which require DNA as a template. Histones thereby play a central role in transcription regulation, DNA repair, DNA replication and chromosomal stability. DNA accessibility is regulated via a complex set of post-translational modifications of histones, also called histone code, and nucleosome remodeling. This chain is Histone H2A type 1-H, found in Mus musculus (Mouse).